The sequence spans 129 residues: Ribonuclease P protein component (129 aa).

It belongs to the RnpA family. In terms of assembly, consists of a catalytic RNA component (M1 or rnpB) and a protein subunit.

The enzyme catalyses Endonucleolytic cleavage of RNA, removing 5'-extranucleotides from tRNA precursor.. RNaseP catalyzes the removal of the 5'-leader sequence from pre-tRNA to produce the mature 5'-terminus. It can also cleave other RNA substrates such as 4.5S RNA. The protein component plays an auxiliary but essential role in vivo by binding to the 5'-leader sequence and broadening the substrate specificity of the ribozyme. This Corynebacterium jeikeium (strain K411) protein is Ribonuclease P protein component.